The primary structure comprises 185 residues: Small ribosomal subunit protein uS4c (185 aa).

Residues 72–134 (MRLDNVIFRL…PTSCNALKGE (63 aa)) form the S4 RNA-binding domain. The interval 132 to 154 (KGESPGGGETPDHLTASLSEGSR) is disordered.

This sequence belongs to the universal ribosomal protein uS4 family. Part of the 30S ribosomal subunit. Contacts protein S5. The interaction surface between S4 and S5 is involved in control of translational fidelity.

It localises to the plastid. It is found in the chloroplast. In terms of biological role, one of the primary rRNA binding proteins, it binds directly to 16S rRNA where it nucleates assembly of the body of the 30S subunit. Functionally, with S5 and S12 plays an important role in translational accuracy. The polypeptide is Small ribosomal subunit protein uS4c (rps4) (Woodwardia radicans (Rooting chainfern)).